Here is a 478-residue protein sequence, read N- to C-terminus: Putative response regulator NtrX-like (478 aa).

In terms of domain architecture, Response regulatory spans 5 to 121 (DVLIVDDEED…KLVILLKRAC (117 aa)). Asp-54 is subject to 4-aspartylphosphate. Residues 143-372 (LVGNSTITLK…LRNVVEWTLI (230 aa)) form the Sigma-54 factor interaction domain. Residues 171-178 (GKVGSGKE) and 235-244 (ANNGTLYIDE) each bind ATP.

Functionally, member of the two-component regulatory system RBE_0312/RBE_0470. The protein is Putative response regulator NtrX-like of Rickettsia bellii (strain RML369-C).